Consider the following 276-residue polypeptide: N-acyl homoserine lactonase AiiB (276 aa).

H111, H113, H116, H191, D213, and H259 together coordinate Zn(2+).

It belongs to the metallo-beta-lactamase superfamily. Requires Zn(2+) as cofactor.

It carries out the reaction an N-acyl-L-homoserine lactone + H2O = an N-acyl-L-homoserine + H(+). In Rhizobium rhizogenes (strain K84 / ATCC BAA-868) (Agrobacterium radiobacter), this protein is N-acyl homoserine lactonase AiiB.